A 248-amino-acid chain; its full sequence is Tetrachloro-P-hydroquinone reductive dehalogenase (248 aa).

Positions 2-84 (PEVSLYNYTM…EAAKLGKVGI (83 aa)) constitute a GST N-terminal domain. One can recognise a GST C-terminal domain in the interval 133-248 (YAEKYPELRS…RVMPNWKGGI (116 aa)).

It belongs to the GST superfamily. As to quaternary structure, homodimer.

The catalysed reaction is 2,6-dichlorohydroquinone + glutathione disulfide + chloride + H(+) = 2,3,6-trichlorohydroquinone + 2 glutathione. It carries out the reaction 2,3,6-trichlorohydroquinone + glutathione disulfide + chloride = 2,3,5,6-tetrachlorohydroquinone + 2 glutathione. The protein operates within xenobiotic degradation; pentachlorophenol degradation. In terms of biological role, sequential reduction of tetrachloro-p-hydroquinone to monochlorophenol, using glutathione as the reducing agent. The polypeptide is Tetrachloro-P-hydroquinone reductive dehalogenase (pcpC) (Sphingobium chlorophenolicum).